We begin with the raw amino-acid sequence, 264 residues long: 3-methyl-2-oxobutanoate hydroxymethyltransferase (264 aa).

Residues Asp46 and Asp85 each contribute to the Mg(2+) site. Residues Asp46–Ser47, Asp85, and Lys113 contribute to the 3-methyl-2-oxobutanoate site. Glu115 lines the Mg(2+) pocket. The Proton acceptor role is filled by Glu181.

This sequence belongs to the PanB family. As to quaternary structure, homodecamer; pentamer of dimers. Requires Mg(2+) as cofactor.

The protein resides in the cytoplasm. It catalyses the reaction 3-methyl-2-oxobutanoate + (6R)-5,10-methylene-5,6,7,8-tetrahydrofolate + H2O = 2-dehydropantoate + (6S)-5,6,7,8-tetrahydrofolate. It functions in the pathway cofactor biosynthesis; (R)-pantothenate biosynthesis; (R)-pantoate from 3-methyl-2-oxobutanoate: step 1/2. Functionally, catalyzes the reversible reaction in which hydroxymethyl group from 5,10-methylenetetrahydrofolate is transferred onto alpha-ketoisovalerate to form ketopantoate. This Salmonella typhi protein is 3-methyl-2-oxobutanoate hydroxymethyltransferase.